Reading from the N-terminus, the 98-residue chain is Integration host factor subunit beta (98 aa).

Belongs to the bacterial histone-like protein family. Heterodimer of an alpha and a beta chain.

Its function is as follows. This protein is one of the two subunits of integration host factor, a specific DNA-binding protein that functions in genetic recombination as well as in transcriptional and translational control. This chain is Integration host factor subunit beta, found in Pseudomonas fluorescens (strain SBW25).